A 99-amino-acid chain; its full sequence is Large ribosomal subunit protein eL36A (99 aa).

Belongs to the eukaryotic ribosomal protein eL36 family. As to quaternary structure, component of the large ribosomal subunit (LSU). Mature yeast ribosomes consist of a small (40S) and a large (60S) subunit. The 40S small subunit contains 1 molecule of ribosomal RNA (18S rRNA) and at least 33 different proteins. The large 60S subunit contains 3 rRNA molecules (25S, 5.8S and 5S rRNA) and at least 46 different proteins.

It is found in the cytoplasm. Component of the ribosome, a large ribonucleoprotein complex responsible for the synthesis of proteins in the cell. The small ribosomal subunit (SSU) binds messenger RNAs (mRNAs) and translates the encoded message by selecting cognate aminoacyl-transfer RNA (tRNA) molecules. The large subunit (LSU) contains the ribosomal catalytic site termed the peptidyl transferase center (PTC), which catalyzes the formation of peptide bonds, thereby polymerizing the amino acids delivered by tRNAs into a polypeptide chain. The nascent polypeptides leave the ribosome through a tunnel in the LSU and interact with protein factors that function in enzymatic processing, targeting, and the membrane insertion of nascent chains at the exit of the ribosomal tunnel. This Schizosaccharomyces pombe (strain 972 / ATCC 24843) (Fission yeast) protein is Large ribosomal subunit protein eL36A (rpl3601).